A 495-amino-acid chain; its full sequence is UDP-N-acetylmuramoyl-L-alanyl-D-glutamate--2,6-diaminopimelate ligase (495 aa).

UDP-N-acetyl-alpha-D-muramoyl-L-alanyl-D-glutamate-binding positions include Leu27, Ser29, and 44 to 46; that span reads HQA. 116–122 lines the ATP pocket; that stretch reads GTNGKTT. UDP-N-acetyl-alpha-D-muramoyl-L-alanyl-D-glutamate is bound by residues Asn157, 158–159, Ser185, Gln191, and Arg193; that span reads TT. Position 225 is an N6-carboxylysine (Lys225). Meso-2,6-diaminopimelate is bound by residues Arg390, 414 to 417, Gly465, and Glu469; that span reads DNPR. Residues 414–417 carry the Meso-diaminopimelate recognition motif motif; the sequence is DNPR.

Belongs to the MurCDEF family. MurE subfamily. Mg(2+) serves as cofactor. Carboxylation is probably crucial for Mg(2+) binding and, consequently, for the gamma-phosphate positioning of ATP.

The protein localises to the cytoplasm. It catalyses the reaction UDP-N-acetyl-alpha-D-muramoyl-L-alanyl-D-glutamate + meso-2,6-diaminopimelate + ATP = UDP-N-acetyl-alpha-D-muramoyl-L-alanyl-gamma-D-glutamyl-meso-2,6-diaminopimelate + ADP + phosphate + H(+). It participates in cell wall biogenesis; peptidoglycan biosynthesis. Its function is as follows. Catalyzes the addition of meso-diaminopimelic acid to the nucleotide precursor UDP-N-acetylmuramoyl-L-alanyl-D-glutamate (UMAG) in the biosynthesis of bacterial cell-wall peptidoglycan. The protein is UDP-N-acetylmuramoyl-L-alanyl-D-glutamate--2,6-diaminopimelate ligase of Salmonella paratyphi A (strain ATCC 9150 / SARB42).